The sequence spans 313 residues: Ribosomal RNA small subunit methyltransferase H (313 aa).

Residues 48-50 (GGH), Asp-68, Phe-102, Asp-120, and Gln-127 contribute to the S-adenosyl-L-methionine site. Residues 290–313 (TATEEEIDRNPRSRSAKLRAAARK) are disordered. Over residues 301 to 313 (RSRSAKLRAAARK) the composition is skewed to basic residues.

It belongs to the methyltransferase superfamily. RsmH family.

It is found in the cytoplasm. It catalyses the reaction cytidine(1402) in 16S rRNA + S-adenosyl-L-methionine = N(4)-methylcytidine(1402) in 16S rRNA + S-adenosyl-L-homocysteine + H(+). Its function is as follows. Specifically methylates the N4 position of cytidine in position 1402 (C1402) of 16S rRNA. The protein is Ribosomal RNA small subunit methyltransferase H of Koribacter versatilis (strain Ellin345).